Reading from the N-terminus, the 392-residue chain is Protein FAM185A (392 aa).

The segment at 39–60 is disordered; that stretch reads YSSGGSERWPGSETEVPPPGPG.

The polypeptide is Protein FAM185A (FAM185A) (Homo sapiens (Human)).